Reading from the N-terminus, the 928-residue chain is Periplasmic nitrate reductase (928 aa).

Residues 1–33 (MAFSRREFLKSAAAASAASAVGMSVPSQLLAQA) constitute a signal peptide (tat-type signal). The region spanning 40 to 96 (WRWDKSVCRFCGTGCGIMVATKNDQIVAVKGDPAAPVNRGLNCIKGYFNAKIMYGAD) is the 4Fe-4S Mo/W bis-MGD-type domain. The [4Fe-4S] cluster site is built by Cys-47, Cys-50, Cys-54, and Cys-82. Mo-bis(molybdopterin guanine dinucleotide) is bound by residues Lys-84, Gln-152, Asn-177, Cys-181, 214-221 (WGANMAEM), 265-267 (QTD), Met-422, Gln-426, Asn-532, 557-558 (SD), Lys-580, Asp-607, and 818-827 (TGRVLEHWHS). Trp-894 provides a ligand contact to substrate. Positions 902 and 919 each coordinate Mo-bis(molybdopterin guanine dinucleotide).

Belongs to the prokaryotic molybdopterin-containing oxidoreductase family. NasA/NapA/NarB subfamily. In terms of assembly, component of the periplasmic nitrate reductase NapAB complex composed of NapA and NapB. The cofactor is [4Fe-4S] cluster. Mo-bis(molybdopterin guanine dinucleotide) serves as cofactor. In terms of processing, predicted to be exported by the Tat system. The position of the signal peptide cleavage has not been experimentally proven.

The protein localises to the periplasm. The enzyme catalyses 2 Fe(II)-[cytochrome] + nitrate + 2 H(+) = 2 Fe(III)-[cytochrome] + nitrite + H2O. Functionally, catalytic subunit of the periplasmic nitrate reductase complex NapAB. Receives electrons from NapB and catalyzes the reduction of nitrate to nitrite. This Wolinella succinogenes (strain ATCC 29543 / DSM 1740 / CCUG 13145 / JCM 31913 / LMG 7466 / NCTC 11488 / FDC 602W) (Vibrio succinogenes) protein is Periplasmic nitrate reductase.